Reading from the N-terminus, the 273-residue chain is Putative pyruvate, phosphate dikinase regulatory protein (273 aa).

151 to 158 (GVSRTSKT) provides a ligand contact to ADP.

The protein belongs to the pyruvate, phosphate/water dikinase regulatory protein family. PDRP subfamily.

It carries out the reaction N(tele)-phospho-L-histidyl/L-threonyl-[pyruvate, phosphate dikinase] + ADP = N(tele)-phospho-L-histidyl/O-phospho-L-threonyl-[pyruvate, phosphate dikinase] + AMP + H(+). The catalysed reaction is N(tele)-phospho-L-histidyl/O-phospho-L-threonyl-[pyruvate, phosphate dikinase] + phosphate + H(+) = N(tele)-phospho-L-histidyl/L-threonyl-[pyruvate, phosphate dikinase] + diphosphate. In terms of biological role, bifunctional serine/threonine kinase and phosphorylase involved in the regulation of the pyruvate, phosphate dikinase (PPDK) by catalyzing its phosphorylation/dephosphorylation. The sequence is that of Putative pyruvate, phosphate dikinase regulatory protein from Desulfitobacterium hafniense (strain Y51).